A 780-amino-acid chain; its full sequence is Probable trehalase (780 aa).

The disordered stretch occupies residues methionine 1 to histidine 48. Phosphoserine is present on residues serine 52 and serine 53. Residue threonine 88 is modified to Phosphothreonine. Serine 112 bears the Phosphoserine mark. Substrate is bound by residues arginine 331, tryptophan 338–aspartate 339, asparagine 375, arginine 384, arginine 384–glutamine 386, and glycine 505. Catalysis depends on proton donor/acceptor residues aspartate 507 and glutamate 703.

The protein belongs to the glycosyl hydrolase 37 family.

The enzyme catalyses alpha,alpha-trehalose + H2O = alpha-D-glucose + beta-D-glucose. The polypeptide is Probable trehalase (NTH2) (Saccharomyces cerevisiae (strain ATCC 204508 / S288c) (Baker's yeast)).